The following is a 448-amino-acid chain: Phosphoglucosamine mutase (448 aa).

S100 acts as the Phosphoserine intermediate in catalysis. Residues S100, D240, D242, and D244 each coordinate Mg(2+). S100 is subject to Phosphoserine.

It belongs to the phosphohexose mutase family. Homodimer, may form a complex with CdaA. The cofactor is Mg(2+). In terms of processing, activated by phosphorylation.

It carries out the reaction alpha-D-glucosamine 1-phosphate = D-glucosamine 6-phosphate. In terms of biological role, catalyzes the conversion of glucosamine-6-phosphate to glucosamine-1-phosphate. Glucosamine-1-phosphate is used for cell wall biosynthesis. The protein is Phosphoglucosamine mutase of Bacillus subtilis (strain 168).